Here is a 698-residue protein sequence, read N- to C-terminus: Methionine--tRNA ligase (698 aa).

Positions 18 to 28 (PYANGDLHVGH) match the 'HIGH' region motif. The Zn(2+) site is built by C149, C152, C161, and C165. T350 lines the ATP pocket. The segment at 567–590 (EAADAGDEEGEDEDEEPPAADLEP) is disordered. A compositionally biased stretch (acidic residues) spans 570-584 (DAGDEEGEDEDEEPP). The tRNA-binding domain occupies 600–698 (DFQDLDIRVA…EDAEPGTKVQ (99 aa)).

Belongs to the class-I aminoacyl-tRNA synthetase family. MetG type 1 subfamily. In terms of assembly, homodimer. It depends on Zn(2+) as a cofactor.

The protein resides in the cytoplasm. It carries out the reaction tRNA(Met) + L-methionine + ATP = L-methionyl-tRNA(Met) + AMP + diphosphate. In terms of biological role, is required not only for elongation of protein synthesis but also for the initiation of all mRNA translation through initiator tRNA(fMet) aminoacylation. In Natronomonas pharaonis (strain ATCC 35678 / DSM 2160 / CIP 103997 / JCM 8858 / NBRC 14720 / NCIMB 2260 / Gabara) (Halobacterium pharaonis), this protein is Methionine--tRNA ligase.